Reading from the N-terminus, the 729-residue chain is MRSKAKGLVRPLITKPVQPLSSHMHLFLLCILFLSALFLTLSEAVCNLQDRESLIWFSGNVSSSVSPLNWNLSIDCCSWEGITCDDSSDSHVTVISLPSRGLSGTLASSVQNIHRLSRLDLSYNRLSGPLPPGFFSTLDQLMILNLSYNSFNGELPLEQAFGNESNRFFSIQTLDLSSNLLEGEILRSSVYLQGTINLISFNVSNNSFTGPIPSFMCRSSPQLSKLDFSYNDFSGHISQELGRCLRLTVLQAGFNNLSGVIPSEIYNLSELEQLFLPANQLTGKIDNNITRLRKLTSLALYSNHLEGEIPMDIGNLSSLRSLQLHINNINGTVPLSLANCTKLVKLNLRVNQLGGGLTELEFSQLQSLKVLDLGNNSFTGALPDKIFSCKSLTAIRFAGNKLTGEISPQVLELESLSFMGLSDNKLTNITGALSILQGCRKLSTLILAKNFYDETVPSKEDFLSPDGFPKLRIFGVGACRLRGEIPAWLINLNKVEVMDLSMNRFVGSIPGWLGTLPDLFYLDLSDNLLTGELPKELFQLRALMSQKITENNYLELPIFLNPNNVTTNQQYNKLYSFPPTIYIRRNNLTGSIPVEVGQLKVLHILELLGNNLSGSIPDELSNLTNLERLDLSNNNLSGSIPWSLTNLNFLSYFNVANNSLEGPIPSEGQFDTFPKANFEGNPLLCGGVLLTSCKPTRAKENDELNRTFLMGIAIGYFLSFVSILVVRAW.

An N-terminal signal peptide occupies residues 1–44 (MRSKAKGLVRPLITKPVQPLSSHMHLFLLCILFLSALFLTLSEA). The segment at 45-82 (VCNLQDRESLIWFSGNVSSSVSPLNWNLSIDCCSWEGI) is N-cap. The Extracellular segment spans residues 45–707 (VCNLQDRESL…AKENDELNRT (663 aa)). N-linked (GlcNAc...) asparagine glycosylation is found at asparagine 60 and asparagine 71. LRR repeat units lie at residues 89–113 (DSHV…VQNI), 114–137 (HRLS…FFST), 139–163 (DQLM…AFGN), 168–193 (FFSI…VYLQ), 195–219 (TINL…MCRS), 220–244 (SPQL…LGRC), 245–268 (LRLT…IYNL), 269–292 (SELE…ITRL), 293–316 (RKLT…IGNL), 317–340 (SSLR…LANC), 342–364 (KLVK…EFSQ), 365–389 (LQSL…IFSC), 391–413 (SLTA…VLEL), 414–437 (ESLS…SILQ), 439–464 (CRKL…DFLS), 468–492 (FPKL…LINL), 493–515 (NKVE…WLGT), 516–540 (LPDL…LFQL), 542–560 (ALMS…PIFL), and 561–584 (NPNN…IYIR). Residues asparagine 145 and asparagine 163 are each glycosylated (N-linked (GlcNAc...) asparagine). N-linked (GlcNAc...) asparagine glycosylation is found at asparagine 202 and asparagine 205. Residues asparagine 256, asparagine 267, asparagine 288, asparagine 315, asparagine 330, and asparagine 339 are each glycosylated (N-linked (GlcNAc...) asparagine). A glycan (N-linked (GlcNAc...) asparagine) is linked at asparagine 375. The N-linked (GlcNAc...) asparagine glycan is linked to asparagine 428. Residues asparagine 564, asparagine 587, asparagine 611, asparagine 622, asparagine 635, asparagine 657, and asparagine 705 are each glycosylated (N-linked (GlcNAc...) asparagine). LRR repeat units follow at residues 599-623 (LKVL…LSNL), 624-647 (TNLE…LTNL), and 649-672 (FLSY…QFDT). A C-cap/acidic domain region spans residues 690 to 707 (LTSCKPTRAKENDELNRT). Residues 708–728 (FLMGIAIGYFLSFVSILVVRA) form a helical membrane-spanning segment. Position 729 (tryptophan 729) is a topological domain, cytoplasmic.

Belongs to the RLP family.

The protein localises to the cell membrane. Its function is as follows. Involved in the perception of CLV3 and CLV3-like peptides, that act as extracellular signals regulating meristems maintenance. The sequence is that of Receptor-like protein 2 from Arabidopsis thaliana (Mouse-ear cress).